We begin with the raw amino-acid sequence, 475 residues long: BTB/POZ domain-containing protein 10 (475 aa).

Residues 1–143 (MAGRPHPYDG…SSQSSSDGSC (143 aa)) form a disordered region. Basic residues predominate over residues 22–31 (LHSRPRKLYK). A compositionally biased stretch (basic and acidic residues) spans 57 to 80 (GHERSRDRRRSSDRSRDSSHERTE). The span at 81–94 (SQLTPCIRNVTSPT) shows a compositional bias: polar residues. The segment covering 97–107 (HHVEREKDHSS) has biased composition (basic and acidic residues). Low complexity predominate over residues 108–142 (SRPSSPRPQKASPNGSISSAGNSSRNSSQSSSDGS). The segment at 146-475 (AGEMVFVYEN…LDPDAQNPML (330 aa)) is interaction with AKT family members. The region spanning 167 to 241 (ERVTLIVDNT…YKTGIIRCPD (75 aa)) is the BTB domain. The disordered stretch occupies residues 455-475 (LPIHPPSGNSDLDPDAQNPML).

In terms of assembly, interacts (via C-terminal 330-amino-acid region) with AKT1; AKT2 and AKT3. Interacts with PPP2CA and PPP1CA. As to expression, ubiquitously expressed. Highly expressed in adult brain, testis, aorta and small intestine and weakly expressed in the heart, lung, liver, kidney, pancreas, spleen, thymus, prostate, ovary and colon. Down-regulated in glioma.

The protein resides in the nucleus. It localises to the cytoplasm. Its function is as follows. Plays a major role as an activator of AKT family members by inhibiting PPP2CA-mediated dephosphorylation, thereby keeping AKTs activated. Plays a role in preventing motor neuronal death and accelerating the growth of pancreatic beta cells. This chain is BTB/POZ domain-containing protein 10 (BTBD10), found in Homo sapiens (Human).